A 393-amino-acid chain; its full sequence is Calreticulin (393 aa).

An N-terminal signal peptide occupies residues 1 to 16; that stretch reads MLSILLTLLLSKYALG. Asn-27 carries an N-linked (GlcNAc...) asparagine glycan. A disulfide bridge links Cys-103 with Cys-135. Residues Tyr-107, Lys-109, Tyr-126, and Asp-133 each coordinate an alpha-D-glucoside. Tandem repeats lie at residues 189 to 200, 208 to 219, 225 to 236, 242 to 253, 257 to 267, 271 to 281, and 285 to 295. Positions 189–253 are 4 X 12 AA approximate repeats; the sequence is VEEGSLEDDW…DAKKPDDWDD (65 aa). The interval 194 to 277 is disordered; sequence LEDDWDMLPP…EYKGEWTPRR (84 aa). Over residues 202 to 216 the composition is skewed to basic and acidic residues; it reads PPKKIDDPNDKKPDD. The segment covering 217–226 has biased composition (acidic residues); the sequence is WVDEQFIDDP. Basic and acidic residues-rich tracts occupy residues 227 to 249 and 258 to 277; these read DDKKPDNWDQPKTIPDMDAKKPD and EWERPQKDNPEYKGEWTPRR. The 3 X 11 AA approximate repeats stretch occupies residues 257–295; sequence GEWERPQKDNPEYKGEWTPRRIDNPKYKGEWKPVQIDNP. Asp-315 serves as a coordination point for an alpha-D-glucoside. The tract at residues 351–393 is disordered; that stretch reads AEVAKEQSSAKDDKEEAEETKERKELPYDAKASDEPSGDHDEL. The Prevents secretion from ER motif lies at 390 to 393; the sequence is HDEL.

Belongs to the calreticulin family.

The protein resides in the endoplasmic reticulum lumen. Functionally, molecular calcium-binding chaperone promoting folding, oligomeric assembly and quality control in the ER via the calreticulin/calnexin cycle. This lectin may interact transiently with almost all of the monoglucosylated glycoproteins that are synthesized in the ER. The polypeptide is Calreticulin (Schistosoma mansoni (Blood fluke)).